The primary structure comprises 153 residues: Large ribosomal subunit protein uL22 (153 aa).

It belongs to the universal ribosomal protein uL22 family. As to quaternary structure, part of the 50S ribosomal subunit.

Functionally, this protein binds specifically to 23S rRNA. It makes multiple contacts with different domains of the 23S rRNA in the assembled 50S subunit and ribosome. The globular domain of the protein is located near the polypeptide exit tunnel on the outside of the subunit, while an extended beta-hairpin is found that lines the wall of the exit tunnel in the center of the 70S ribosome. This is Large ribosomal subunit protein uL22 from Methanococcus maripaludis (strain DSM 14266 / JCM 13030 / NBRC 101832 / S2 / LL).